The sequence spans 157 residues: Transcription elongation factor GreA (157 aa).

Residues 13–75 (RARLEAELEE…EIKSILARAQ (63 aa)) adopt a coiled-coil conformation.

It belongs to the GreA/GreB family.

Necessary for efficient RNA polymerase transcription elongation past template-encoded arresting sites. The arresting sites in DNA have the property of trapping a certain fraction of elongating RNA polymerases that pass through, resulting in locked ternary complexes. Cleavage of the nascent transcript by cleavage factors such as GreA or GreB allows the resumption of elongation from the new 3'terminus. GreA releases sequences of 2 to 3 nucleotides. The protein is Transcription elongation factor GreA of Roseiflexus castenholzii (strain DSM 13941 / HLO8).